A 461-amino-acid polypeptide reads, in one-letter code: Chromosomal replication initiator protein DnaA (461 aa).

Positions 1-87 (MAVSLWQQCI…IGSRPSAKPV (87 aa)) are domain I, interacts with DnaA modulators. The tract at residues 87-124 (VVQATAAIRPKPAASKAVEKPTFNAPQAEPAITANHRS) is domain II. Residues 125-341 (NINPTYQFDN…GALNRVIANA (217 aa)) form a domain III, AAA+ region region. The ATP site is built by glycine 169, glycine 171, lysine 172, and threonine 173. Positions 342 to 461 (NFTGRPITID…YANLIRTLSS (120 aa)) are domain IV, binds dsDNA.

Belongs to the DnaA family. In terms of assembly, oligomerizes as a right-handed, spiral filament on DNA at oriC.

Its subcellular location is the cytoplasm. In terms of biological role, plays an essential role in the initiation and regulation of chromosomal replication. ATP-DnaA binds to the origin of replication (oriC) to initiate formation of the DNA replication initiation complex once per cell cycle. Binds the DnaA box (a 9 base pair repeat at the origin) and separates the double-stranded (ds)DNA. Forms a right-handed helical filament on oriC DNA; dsDNA binds to the exterior of the filament while single-stranded (ss)DNA is stabiized in the filament's interior. The ATP-DnaA-oriC complex binds and stabilizes one strand of the AT-rich DNA unwinding element (DUE), permitting loading of DNA polymerase. After initiation quickly degrades to an ADP-DnaA complex that is not apt for DNA replication. Binds acidic phospholipids. In Shewanella piezotolerans (strain WP3 / JCM 13877), this protein is Chromosomal replication initiator protein DnaA.